Reading from the N-terminus, the 174-residue chain is Phospholipase A2-like protein Y52B11A.8 (174 aa).

Positions 1 to 18 (MRGLLVATWIFVSVAASA) are cleaved as a signal peptide. N-linked (GlcNAc...) asparagine glycosylation is found at asparagine 49 and asparagine 143. Positions 137 to 174 (YEASGPNASTTEESPAEKDDYDYESHVAGLNATPSSST) are disordered.

It belongs to the phospholipase A2 family.

Its subcellular location is the secreted. In Caenorhabditis elegans, this protein is Phospholipase A2-like protein Y52B11A.8.